A 224-amino-acid chain; its full sequence is 2-C-methyl-D-erythritol 4-phosphate cytidylyltransferase (224 aa).

It belongs to the IspD/TarI cytidylyltransferase family. IspD subfamily.

It carries out the reaction 2-C-methyl-D-erythritol 4-phosphate + CTP + H(+) = 4-CDP-2-C-methyl-D-erythritol + diphosphate. The protein operates within isoprenoid biosynthesis; isopentenyl diphosphate biosynthesis via DXP pathway; isopentenyl diphosphate from 1-deoxy-D-xylulose 5-phosphate: step 2/6. Catalyzes the formation of 4-diphosphocytidyl-2-C-methyl-D-erythritol from CTP and 2-C-methyl-D-erythritol 4-phosphate (MEP). This chain is 2-C-methyl-D-erythritol 4-phosphate cytidylyltransferase, found in Caldicellulosiruptor bescii (strain ATCC BAA-1888 / DSM 6725 / KCTC 15123 / Z-1320) (Anaerocellum thermophilum).